The following is a 1056-amino-acid chain: Multidrug resistance protein MdtB (1056 aa).

Transmembrane regions (helical) follow at residues 16–36, 342–362, 373–393, 396–416, 440–460, 472–492, 537–557, 869–889, 890–910, 911–931, 968–988, and 1002–1022; these read FILR…AGII, DVQF…YVFL, IAVP…GFSV, LTLM…IVVI, IGFT…PLLF, FAIT…TLTP, WITL…YLTI, LILA…ESFI, HPVT…LALM, VGGY…IGIV, ILMT…STGI, and GGLI…YLLF. Residues 1037–1056 are disordered; the sequence is LQSQNQRELDHSPVNHQEPL. Positions 1043-1056 are enriched in basic and acidic residues; it reads RELDHSPVNHQEPL.

Belongs to the resistance-nodulation-cell division (RND) (TC 2.A.6) family. MdtB subfamily. In terms of assembly, part of a tripartite efflux system composed of MdtA, MdtB and MdtC. MdtB forms a heteromultimer with MdtC.

Its subcellular location is the cell inner membrane. In Xenorhabdus bovienii (strain SS-2004) (Xenorhabdus nematophila subsp. bovienii), this protein is Multidrug resistance protein MdtB.